Here is a 391-residue protein sequence, read N- to C-terminus: Sulfate adenylyltransferase (391 aa).

This sequence belongs to the sulfate adenylyltransferase family.

The catalysed reaction is sulfate + ATP + H(+) = adenosine 5'-phosphosulfate + diphosphate. It participates in sulfur metabolism; hydrogen sulfide biosynthesis; sulfite from sulfate: step 1/3. The protein is Sulfate adenylyltransferase of Lactiplantibacillus plantarum (strain ATCC BAA-793 / NCIMB 8826 / WCFS1) (Lactobacillus plantarum).